The following is a 1222-amino-acid chain: BOS complex subunit NOMO1 (1222 aa).

The N-terminal stretch at 1–31 (MLVGQGAGPLGPAVVTAAVVLLLSGVGPAHG) is a signal peptide. Residues 32-1155 (SEDIVVGCGG…NPTRKLPEQD (1124 aa)) are Extracellular-facing. Residues Asn50, Asn218, and Asn618 are each glycosylated (N-linked (GlcNAc...) asparagine). The chain crosses the membrane as a helical span at residues 1156–1176 (IAQGSYIALPLTLLVLLAGYN). At 1177-1222 (HDKLIPLLLQLTSRLQGVRALGQAASDNSGPEDAKRQAKKQKTRRT) the chain is on the cytoplasmic side. Positions 1198-1222 (GQAASDNSGPEDAKRQAKKQKTRRT) are disordered. A Phosphoserine modification is found at Ser1205. Positions 1213-1222 (QAKKQKTRRT) are enriched in basic residues.

In terms of assembly, component of the back of Sec61 (BOS) complex, composed of NCLN/Nicalin, NOMO (NOMO1, NOMO2 or NOMO3) and TMEM147. The BOS complex is part of the multi-pass translocon (MPT) complex, composed of three subcomplexes, the GEL complex (composed of RAB5IF/OPTI and TMCO1), the BOS complex (composed of NCLN/Nicalin, NOMO and TMEM147) and the PAT complex (composed of WDR83OS/Asterix and CCDC47). The MPT complex associates with the SEC61 complex. Due to the strong similarity between NOMO1, NOMO2 and NOMO3, similar interaction pattern probably occur for the three gene copies. Expressed in colon tumor tissue and in adjacent normal colonic mucosa.

The protein localises to the endoplasmic reticulum membrane. Component of the multi-pass translocon (MPT) complex that mediates insertion of multi-pass membrane proteins into the lipid bilayer of membranes. The MPT complex takes over after the SEC61 complex: following membrane insertion of the first few transmembrane segments of proteins by the SEC61 complex, the MPT complex occludes the lateral gate of the SEC61 complex to promote insertion of subsequent transmembrane regions. This is BOS complex subunit NOMO1 (NOMO1) from Homo sapiens (Human).